The sequence spans 457 residues: Flavohemoprotein-1 (457 aa).

A Globin domain is found at 2–157 (ALSEDTIKAV…LADLLIKREE (156 aa)). Position 106 (H106) interacts with heme b. Residues Y116 and E156 each act as charge relay system in the active site. The interval 168 to 456 (GGWRQTRTFR…FEMFGPFKAS (289 aa)) is reductase. The region spanning 171–278 (RQTRTFRVEE…APPYGDFFLR (108 aa)) is the FAD-binding FR-type domain. Residues Y210 and 227-230 (RQYS) each bind FAD. 320 to 325 (GIGQTP) is an NADP(+) binding site. 449–452 (MFGP) is a binding site for FAD.

It belongs to the globin family. Two-domain flavohemoproteins subfamily. This sequence in the C-terminal section; belongs to the flavoprotein pyridine nucleotide cytochrome reductase family. In terms of assembly, monomer. Requires heme b as cofactor. The cofactor is FAD.

It carries out the reaction 2 nitric oxide + NADPH + 2 O2 = 2 nitrate + NADP(+) + H(+). The enzyme catalyses 2 nitric oxide + NADH + 2 O2 = 2 nitrate + NAD(+) + H(+). Flavohemoprotein involved in nitric oxide (NO) detoxification in an aerobic process, termed nitric oxide dioxygenase (NOD) reaction that utilizes O(2) and NAD(P)H to convert NO to nitrate, which protects the protozoan parasite from various noxious nitrogen compounds. Therefore, plays a central role in the inducible response to nitrosative stress. May also be involved in O(2) detoxification. The sequence is that of Flavohemoprotein-1 (hmpA-1) from Giardia intestinalis (strain P15) (Giardia lamblia).